Reading from the N-terminus, the 316-residue chain is Protoheme IX farnesyltransferase (316 aa).

The next 9 helical transmembrane spans lie at 34-54, 55-75, 95-115, 118-138, 155-175, 182-202, 228-250, 254-273, and 287-307; these read VMSL…GHIN, PFIG…SGAL, IPAG…LSAF, IILG…TIFF, IVIG…CVTG, IVLF…LALF, IVIY…FASL, AFAT…VLRM, and FAFS…DYAI.

It belongs to the UbiA prenyltransferase family. Protoheme IX farnesyltransferase subfamily.

The protein localises to the cell inner membrane. The enzyme catalyses heme b + (2E,6E)-farnesyl diphosphate + H2O = Fe(II)-heme o + diphosphate. It functions in the pathway porphyrin-containing compound metabolism; heme O biosynthesis; heme O from protoheme: step 1/1. Functionally, converts heme B (protoheme IX) to heme O by substitution of the vinyl group on carbon 2 of heme B porphyrin ring with a hydroxyethyl farnesyl side group. The sequence is that of Protoheme IX farnesyltransferase from Rhizobium meliloti (strain 1021) (Ensifer meliloti).